The sequence spans 312 residues: Acetylglutamate kinase (312 aa).

Substrate-binding positions include 74–75 (GG), Arg-96, and Asn-195.

Belongs to the acetylglutamate kinase family. ArgB subfamily.

It is found in the cytoplasm. It carries out the reaction N-acetyl-L-glutamate + ATP = N-acetyl-L-glutamyl 5-phosphate + ADP. Its pathway is amino-acid biosynthesis; L-arginine biosynthesis; N(2)-acetyl-L-ornithine from L-glutamate: step 2/4. Functionally, catalyzes the ATP-dependent phosphorylation of N-acetyl-L-glutamate. This chain is Acetylglutamate kinase, found in Nocardioides sp. (strain ATCC BAA-499 / JS614).